The following is a 246-amino-acid chain: Auxin-responsive protein IAA11 (246 aa).

The short motif at Leu36–Leu40 is the EAR-like (transcriptional repression) element. Residues Ser136–Thr235 enclose the PB1 domain.

This sequence belongs to the Aux/IAA family. As to quaternary structure, homodimers and heterodimers. Interacts with TPL. In terms of tissue distribution, preferentially expressed in stems and flowers.

It is found in the nucleus. Functionally, aux/IAA proteins are short-lived transcriptional factors that function as repressors of early auxin response genes at low auxin concentrations. Repression is thought to result from the interaction with auxin response factors (ARFs), proteins that bind to the auxin-responsive promoter element (AuxRE). Formation of heterodimers with ARF proteins may alter their ability to modulate early auxin response genes expression. The chain is Auxin-responsive protein IAA11 (IAA11) from Arabidopsis thaliana (Mouse-ear cress).